Reading from the N-terminus, the 345-residue chain is Putative F-box protein At3g17265 (345 aa).

The region spanning 1–46 (MMFAYLPPDLESEILSRVPATFLKELQTTCKRWYALFRDPIFVKKN) is the F-box domain.

The chain is Putative F-box protein At3g17265 from Arabidopsis thaliana (Mouse-ear cress).